The sequence spans 137 residues: Large ribosomal subunit protein uL16 (137 aa).

Residues 1-16 (MLQPKRTKFRKVHTGR) show a composition bias toward basic residues. Positions 1–22 (MLQPKRTKFRKVHTGRNRGLAQ) are disordered.

It belongs to the universal ribosomal protein uL16 family. As to quaternary structure, part of the 50S ribosomal subunit.

In terms of biological role, binds 23S rRNA and is also seen to make contacts with the A and possibly P site tRNAs. The polypeptide is Large ribosomal subunit protein uL16 (Idiomarina loihiensis (strain ATCC BAA-735 / DSM 15497 / L2-TR)).